We begin with the raw amino-acid sequence, 921 residues long: Isoleucine--tRNA ligase (921 aa).

The 'HIGH' region motif lies at 57–67; sequence PYANGELHMGH. E552 lines the L-isoleucyl-5'-AMP pocket. The 'KMSKS' region motif lies at 593 to 597; the sequence is KMSKS. Position 596 (K596) interacts with ATP. C888, C891, C908, and C911 together coordinate Zn(2+).

The protein belongs to the class-I aminoacyl-tRNA synthetase family. IleS type 1 subfamily. As to quaternary structure, monomer. It depends on Zn(2+) as a cofactor.

The protein resides in the cytoplasm. It catalyses the reaction tRNA(Ile) + L-isoleucine + ATP = L-isoleucyl-tRNA(Ile) + AMP + diphosphate. Functionally, catalyzes the attachment of isoleucine to tRNA(Ile). As IleRS can inadvertently accommodate and process structurally similar amino acids such as valine, to avoid such errors it has two additional distinct tRNA(Ile)-dependent editing activities. One activity is designated as 'pretransfer' editing and involves the hydrolysis of activated Val-AMP. The other activity is designated 'posttransfer' editing and involves deacylation of mischarged Val-tRNA(Ile). This is Isoleucine--tRNA ligase from Listeria monocytogenes serotype 4b (strain F2365).